We begin with the raw amino-acid sequence, 278 residues long: MSQAFPAPAKLNLFLHVVGRRDDGYHLLQSVFRLIDRADTVHLELRDDGRIVREGALPGVSEDQDLTVRAARLLQPYARPGAGVGIRLDKRLPMGGGLGGGSSDAATVLLALNRLWEVDLPRQRLQALALRLGADVPVFVFGQTAFAEGVGELLQPIGAPVAWYVVLTPPVHVPTAAIFAAPELTRNTPALKIAPFSAGMGHNDLEPVVVGRYPEVGRHLQWLGQFGEARMTGSGACVFASFATEDAARSVLQALPDTMQGFVARGLDKHPLYDFVPE.

K10 is a catalytic residue. 93 to 103 (PMGGGLGGGSS) contacts ATP. Residue D135 is part of the active site.

This sequence belongs to the GHMP kinase family. IspE subfamily.

The enzyme catalyses 4-CDP-2-C-methyl-D-erythritol + ATP = 4-CDP-2-C-methyl-D-erythritol 2-phosphate + ADP + H(+). It functions in the pathway isoprenoid biosynthesis; isopentenyl diphosphate biosynthesis via DXP pathway; isopentenyl diphosphate from 1-deoxy-D-xylulose 5-phosphate: step 3/6. Catalyzes the phosphorylation of the position 2 hydroxy group of 4-diphosphocytidyl-2C-methyl-D-erythritol. This Thiobacillus denitrificans (strain ATCC 25259 / T1) protein is 4-diphosphocytidyl-2-C-methyl-D-erythritol kinase.